The chain runs to 336 residues: Dihydroorotate dehydrogenase (quinone) (336 aa).

FMN contacts are provided by residues 62–66 (AGLDK) and threonine 86. Lysine 66 serves as a coordination point for substrate. 111 to 115 (NRMGF) contributes to the substrate binding site. 2 residues coordinate FMN: asparagine 139 and asparagine 172. Residue asparagine 172 participates in substrate binding. The active-site Nucleophile is the serine 175. Asparagine 177 provides a ligand contact to substrate. FMN is bound by residues lysine 217 and threonine 245. 246-247 (NT) serves as a coordination point for substrate. FMN is bound by residues glycine 268, glycine 297, and 318-319 (YS).

This sequence belongs to the dihydroorotate dehydrogenase family. Type 2 subfamily. Monomer. FMN is required as a cofactor.

Its subcellular location is the cell membrane. It carries out the reaction (S)-dihydroorotate + a quinone = orotate + a quinol. The protein operates within pyrimidine metabolism; UMP biosynthesis via de novo pathway; orotate from (S)-dihydroorotate (quinone route): step 1/1. Catalyzes the conversion of dihydroorotate to orotate with quinone as electron acceptor. This Aeromonas hydrophila subsp. hydrophila (strain ATCC 7966 / DSM 30187 / BCRC 13018 / CCUG 14551 / JCM 1027 / KCTC 2358 / NCIMB 9240 / NCTC 8049) protein is Dihydroorotate dehydrogenase (quinone).